The chain runs to 331 residues: GTP 3',8-cyclase 2 (331 aa).

The region spanning 9–234 (PFGRRITYLR…PSLARSGGPS (226 aa)) is the Radical SAM core domain. Arginine 18 contacts GTP. [4Fe-4S] cluster contacts are provided by cysteine 25 and cysteine 29. Tyrosine 31 contributes to the S-adenosyl-L-methionine binding site. Cysteine 32 is a binding site for [4Fe-4S] cluster. Residue arginine 67 participates in GTP binding. An S-adenosyl-L-methionine-binding site is contributed by glycine 71. Threonine 98 provides a ligand contact to GTP. Serine 122 serves as a coordination point for S-adenosyl-L-methionine. GTP is bound at residue lysine 159. Methionine 193 serves as a coordination point for S-adenosyl-L-methionine. [4Fe-4S] cluster-binding residues include cysteine 257 and cysteine 260. Residue 262–264 (RVR) participates in GTP binding. Cysteine 274 lines the [4Fe-4S] cluster pocket.

This sequence belongs to the radical SAM superfamily. MoaA family. As to quaternary structure, monomer and homodimer. The cofactor is [4Fe-4S] cluster.

The catalysed reaction is GTP + AH2 + S-adenosyl-L-methionine = (8S)-3',8-cyclo-7,8-dihydroguanosine 5'-triphosphate + 5'-deoxyadenosine + L-methionine + A + H(+). It participates in cofactor biosynthesis; molybdopterin biosynthesis. Functionally, catalyzes the cyclization of GTP to (8S)-3',8-cyclo-7,8-dihydroguanosine 5'-triphosphate. This Pseudomonas aeruginosa (strain ATCC 15692 / DSM 22644 / CIP 104116 / JCM 14847 / LMG 12228 / 1C / PRS 101 / PAO1) protein is GTP 3',8-cyclase 2 (moaA2).